A 438-amino-acid chain; its full sequence is Zinc finger protein 641 (438 aa).

Positions 1–53 are disordered; it reads MQAEDRSQFGSAAEMLSEQTAALGTGWESMNVQLDGAEPQVERGSQEERPWRT. Positions 17-32 are enriched in polar residues; the sequence is SEQTAALGTGWESMNV. Over residues 40–51 the composition is skewed to basic and acidic residues; sequence QVERGSQEERPW. The KRAB domain maps to 109-181; the sequence is VTIKDVSLCF…DPQDLEERDI (73 aa). The transactivation stretch occupies residues 171-265; sequence PDPQDLEERD…EMDSLLRPHT (95 aa). S191 carries the phosphoserine modification. 3 consecutive C2H2-type zinc fingers follow at residues 264 to 286, 292 to 314, and 320 to 342; these read HTCP…QQTH, YSCL…QKTH, and SRCS…QRVH. Residues 345–367 are disordered; that stretch reads GKSCKGQEVGESPGTRKRQRAPP. C2H2-type zinc fingers lie at residues 372-394 and 400-422; these read HVCT…WLTH and FQCP…LLTH. A disordered region spans residues 418–438; that stretch reads HLLTHQGQSPRNSWDRGTSVF. Polar residues predominate over residues 422 to 438; sequence HQGQSPRNSWDRGTSVF. Residue S426 is modified to Phosphoserine.

It belongs to the krueppel C2H2-type zinc-finger protein family. Highly expressed in skeletal muscle, moderate expression in heart, liver, and pancreas, lower expression in placenta, no expression seen in brain, lung, and kidney.

Its subcellular location is the nucleus. Transcriptional activator. Activates transcriptional activities of SRE and AP-1. The protein is Zinc finger protein 641 (ZNF641) of Homo sapiens (Human).